The primary structure comprises 687 residues: MGNGERPPARRPDSSGSPPPAADAPAASNHPFSSHDTKHMTSRRLASRTAVAASLSALMLAACGGDDSANAPTAGGAAPLTPAVASPAGPTGSTPGSTPGATTAPAPSSTSAGQLSVDKMAFAQTHVVPSGGLSWTLPNASASLRPISRRDALVLVAIGQADAVQPVLEAWKDGAKLGALALSPPSALPPTESGGRAYANDRWSAVVPAAWMVPGVSFSVSASNYTSSVAQAPVFGTDADVQLTILPFYLFGADDTNSPPLSTTQAPDAATQQEIFAKWPTAELKVRTHPAGRFSLATVVVGPRADRTGAAQPAYPVTALDQQKDGYGVMSAMLTLITNMRTANGDGPLNNQYYAPLIALNSNGQFANLGGGLGGVGSGAAVGDHRYTGIFIHEQGHAFGLNHAGDEYAKGAYPYAGGSLSGSVWGYDPNHREFLDVLVPTTASSYAKCASSHQLDAQGRCYKQDPMQGGAGDQSSGYKFATFSDYNTGRMQAWIASRVLADPASSTGYSKWDSAAQARAPYTPTTDNNGLYGVNQNLPVQAGVPVHTIVVSFSKAGSAGASYIYPPFSYTGNLIATFDPTSAADRQAITVDKGTYPWYCKGTGCDYTLRVTYADGSRTYRVLQGGFRAWWTPTVDDANATNPLSGSSFRVWAINVPGDKRIGKIELLDTPMVWNGMPANPTVLLSR.

Disordered regions lie at residues 1 to 45 (MGNG…SRRL) and 73 to 112 (TAGG…STSA). A Peptidase M66 domain is found at 233–501 (PVFGTDADVQ…QAWIASRVLA (269 aa)). His393 lines the Zn(2+) pocket. Glu394 is an active-site residue. Zn(2+)-binding residues include His397 and His403.

It belongs to the dictomallein family. The cofactor is Zn(2+).

This chain is Dictomallein (dtmL), found in Burkholderia pseudomallei (strain 1710b).